The chain runs to 225 residues: UPF0758 protein SO_4248 (225 aa).

An MPN domain is found at 102–224 (VLTNPDLTRD…IVSFAERGWI (123 aa)). Zn(2+) is bound by residues His-173, His-175, and Asp-186. A JAMM motif motif is present at residues 173–186 (HNHPSGIAEPSQAD).

This sequence belongs to the UPF0758 family.

This is UPF0758 protein SO_4248 from Shewanella oneidensis (strain ATCC 700550 / JCM 31522 / CIP 106686 / LMG 19005 / NCIMB 14063 / MR-1).